A 358-amino-acid polypeptide reads, in one-letter code: L-Ala-D/L-Glu epimerase (358 aa).

The substrate site is built by R24, T135, and K160. The Proton acceptor; specific for (R)-substrate epimerization role is filled by K162. D190, E218, and D243 together coordinate Mg(2+). Catalysis depends on K267, which acts as the Proton acceptor; specific for (S)-substrate epimerization. Residues C295, D320, and D322 each coordinate substrate.

This sequence belongs to the mandelate racemase/muconate lactonizing enzyme family. Mg(2+) serves as cofactor.

The catalysed reaction is L-alanyl-L-glutamate = L-alanyl-D-glutamate. It functions in the pathway cell wall degradation; peptidoglycan degradation. Its function is as follows. Catalyzes the epimerization of L-Ala-D-Glu to L-Ala-L-Glu and has probably a role in the metabolism of the murein peptide, of which L-Ala-D-Glu is a component. Is also able to catalyze the epimerization of L-Ala-D-Asp. This chain is L-Ala-D/L-Glu epimerase, found in Clostridium acetobutylicum (strain ATCC 824 / DSM 792 / JCM 1419 / IAM 19013 / LMG 5710 / NBRC 13948 / NRRL B-527 / VKM B-1787 / 2291 / W).